A 501-amino-acid polypeptide reads, in one-letter code: G protein-activated inward rectifier potassium channel 1 (501 aa).

Positions 1-40 (MSALRRKFGDDYQVVTTSSSGSGLQPQGPGQDPQQQLVPK) are disordered. The Cytoplasmic portion of the chain corresponds to 1 to 80 (MSALRRKFGD…LFTTLVDLKW (80 aa)). The span at 18–38 (SSSGSGLQPQGPGQDPQQQLV) shows a compositional bias: low complexity. Residues 81 to 105 (RWNLFIFILTYTVAWLFMASMWWVI) traverse the membrane as a helical segment. The Extracellular segment spans residues 106 to 129 (AYTRGDLNKAHVGNYTPCVANVYN). An N-linked (GlcNAc...) asparagine glycan is attached at Asn-119. The helical; Pore-forming intramembrane region spans 130–141 (FPSAFLFFIETE). The pore-forming intramembrane region spans 142–148 (ATIGYGY). The Selectivity filter motif lies at 143–148 (TIGYGY). The Extracellular portion of the chain corresponds to 149-157 (RYITDKCPE). Residues 158-179 (GIILFLFQSILGSIVDAFLIGC) traverse the membrane as a helical segment. Over 180–501 (MFIKMSQPKK…LRKMNSDRFT (322 aa)) the chain is Cytoplasmic. The polyphosphoinositide (PIP2)-binding stretch occupies residues 182–209 (IKMSQPKKRAETLMFSEHAVISMRDGKL). 2 positions are modified to phosphoserine: Ser-385 and Ser-424.

It belongs to the inward rectifier-type potassium channel (TC 1.A.2.1) family. KCNJ3 subfamily. As to quaternary structure, associates with KCNJ5/GIRK4 or KCNJ6/GIRK2 to form a G-protein activated heteromultimer pore-forming unit. The resulting inward current is much larger. Associates with KCNJ9/GIRK3 to form a G-protein activated heteromultimer pore-forming unit.

Its subcellular location is the membrane. It catalyses the reaction K(+)(in) = K(+)(out). With respect to regulation, heteromultimer composed of KCNJ3/GIRK1 and KCNJ5/GIRK4 is activated by phosphatidylinositol 4,5 biphosphate (PtdIns(4,5)P2). Functionally, inward rectifier potassium channels are characterized by a greater tendency to allow potassium to flow into the cell rather than out of it. Their voltage dependence is regulated by the concentration of extracellular potassium; as external potassium is raised, the voltage range of the channel opening shifts to more positive voltages. The inward rectification is mainly due to the blockage of outward current by internal magnesium. This potassium channel is controlled by G proteins. This receptor plays a crucial role in regulating the heartbeat. This is G protein-activated inward rectifier potassium channel 1 (KCNJ3) from Homo sapiens (Human).